Reading from the N-terminus, the 190-residue chain is MSFEELWQKNPMLKPRIEKVVVNFGVGESGDRLTKGAQVIEELTGQKPIRTRAKQTNPSFGIRKKLPIGLKVTLRGKKAEEFLKNAFEAFQKEGKKLYDYSFDDYGNFSFGIHEHIDFPGQKYDPMIGIFGMDVCVTLERPGFRVKRRKRCRAKIPRRHRLTREEAIEFIEKTFGVKVERVLLEEEEETQ.

It belongs to the universal ribosomal protein uL5 family. In terms of assembly, part of the 50S ribosomal subunit; contacts the 5S rRNA and probably tRNA. Forms a bridge to the 30S subunit in the 70S ribosome.

This is one of the proteins that bind and probably mediate the attachment of the 5S RNA into the large ribosomal subunit, where it forms part of the central protuberance. In the 70S ribosome it contacts protein S13 of the 30S subunit (bridge B1b), connecting the 2 subunits; this bridge is implicated in subunit movement. May contact the P site tRNA; the 5S rRNA and some of its associated proteins might help stabilize positioning of ribosome-bound tRNAs. The sequence is that of Large ribosomal subunit protein uL5 from Methanocaldococcus jannaschii (strain ATCC 43067 / DSM 2661 / JAL-1 / JCM 10045 / NBRC 100440) (Methanococcus jannaschii).